The primary structure comprises 301 residues: Fluoroquinolones export ATP-binding protein Rv2688c (301 aa).

The 229-residue stretch at 18-246 folds into the ABC transporter domain; sequence IRVRGLTFRY…RSRRRVRVEY (229 aa). 52 to 59 is an ATP binding site; that stretch reads GPSGAGKS.

It belongs to the ABC transporter superfamily. The complex is composed of 2 ATP-binding proteins (Rv2688c) and 2 transmembrane proteins (Rv2686c and Rv2687c).

Its subcellular location is the cell membrane. Inhibited by reserpine and verapamil. Part of the ABC transporter complex Rv2686c/Rv2687c/Rv2688c involved in fluoroquinolones export. Confers resistance to ciprofloxacin and, to a lesser extent, norfloxacin, moxifloxacin and sparfloxacin. Probably responsible for energy coupling to the transport system. This Mycobacterium tuberculosis (strain ATCC 25618 / H37Rv) protein is Fluoroquinolones export ATP-binding protein Rv2688c.